A 223-amino-acid chain; its full sequence is Regulator of G-protein signaling 19 (223 aa).

Residues 1–30 form a disordered region; sequence MPTPPEAEKQQTGPEEADQPPSMSSHDAAP. A compositionally biased stretch (low complexity) spans 20–29; the sequence is PPSMSSHDAA. A phosphoserine mark is found at Ser-24 and Ser-103. The 117-residue stretch at 96 to 212 folds into the RGS domain; it reads SFDKLMHSPA…LSSPAYRALL (117 aa). A Phosphoserine; by MAPK1 and MAPK3 modification is found at Ser-157. The interaction with GIPC stretch occupies residues 213-223; the sequence is LQGASQSSSEA.

Interacts with GIPC PDZ domain. Interacts with GNAO1. Fatty acylated. Heavily palmitoylated in the cysteine string motif. Post-translationally, phosphorylated, mainly on serine residues.

The protein localises to the membrane. In terms of biological role, inhibits signal transduction by increasing the GTPase activity of G protein alpha subunits thereby driving them into their inactive GDP-bound form. Binds to G-alpha subfamily 1 members, with the order G(i)a3 &gt; G(i)a1 &gt; G(o)a &gt;&gt; G(z)a/G(i)a2. Activity on G(z)-alpha is inhibited by phosphorylation and palmitoylation of the G-protein. The protein is Regulator of G-protein signaling 19 (RGS19) of Bos taurus (Bovine).